The following is a 292-amino-acid chain: Glycine-rich RNA-binding protein RZ1B (292 aa).

In terms of domain architecture, RRM spans 12-90 (SRIFVGGLSW…KVISVNKAEP (79 aa)). Serine 20 bears the Phosphoserine mark. Positions 93 to 114 (GGEDVDQLKKGGGYSSRGKGTE) are disordered. A CCHC-type zinc finger spans residues 117 to 132 (CFKCRRPGHWARDCPS). Basic and acidic residues-rich tracts occupy residues 180-210 (DGRRDRDGGRYSYRDRFDSGDKYEPRDHYPF) and 220-268 (FVSD…EGRP). Positions 180–292 (DGRRDRDGGR…GGRPSSYERW (113 aa)) are disordered.

Expressed in roots, rosette and cauline leaves, stems, floral buds and flowers.

It is found in the nucleus. Binds RNA and DNA sequences non-specifically. May be involved in tolerance to cold stress. In Arabidopsis thaliana (Mouse-ear cress), this protein is Glycine-rich RNA-binding protein RZ1B.